The primary structure comprises 111 residues: TPR repeat-containing protein associated with Hsp90 (111 aa).

Ser-2 carries the N-acetylserine modification. 2 TPR repeats span residues Phe-4–Asn-37 and Val-39–Ala-71.

In terms of assembly, component of the R2TP complex composed at least of RVB1, RVB2, TAH1 and PIH1. Also interacts with HSP90.

It localises to the cytoplasm. The protein resides in the nucleus. The chain is TPR repeat-containing protein associated with Hsp90 (TAH1) from Saccharomyces cerevisiae (strain ATCC 204508 / S288c) (Baker's yeast).